The chain runs to 142 residues: Baculoviral IAP repeat-containing protein 5 (142 aa).

The BIR repeat unit spans residues 18–88 (RISTFKNWPF…KHSSGCAFLS (71 aa)). At Ser-20 the chain carries Phosphoserine; by AURKC. Lys-23 carries the post-translational modification N6-acetyllysine. The residue at position 34 (Thr-34) is a Phosphothreonine; by CDK1 and CDK15. Thr-48 carries the post-translational modification Phosphothreonine. 4 residues coordinate Zn(2+): Cys-57, Cys-60, His-77, and Cys-84. Residues Lys-90, Lys-110, Lys-112, and Lys-115 each carry the N6-acetyllysine modification. Residue Thr-117 is modified to Phosphothreonine; by AURKB. Lys-129 is subject to N6-acetyllysine.

It belongs to the IAP family. Monomer or homodimer. Exists as a homodimer in the apo state and as a monomer in the CPC-bound state. The monomer protects cells against apoptosis more efficiently than the dimer. Only the dimeric form is capable of enhancing tubulin stability in cells. When phosphorylated, interacts with LAMTOR5/HBXIP; the resulting complex binds pro-CASP9, as well as active CASP9, but much less efficiently. Component of the chromosomal passenger complex (CPC) composed of at least BIRC5/survivin, CDCA8/borealin, INCENP, AURKB or AURKC; in the complex forms a triple-helix bundle-based subcomplex with INCENP and CDCA8. Interacts with JTB. Interacts (via BIR domain) with histone H3 phosphorylated at 'Thr-3' (H3pT3). Interacts with EVI5. Interacts with GTP-bound RAN in both the S and M phases of the cell cycle. Interacts with USP9X. Interacts with tubulin. Interacts with BIRC2/c-IAP1. The acetylated form at Lys-129 interacts with STAT3. The monomeric form deacetylated at Lys-129 interacts with XPO1/CRM1. The monomeric form interacts with XIAP/BIRC4. Both the dimeric and monomeric form can interact with DIABLO/SMAC. Interacts with BIRC6/bruce. Interacts with FBXL7; this interaction facilitates the polyubiquitination and subsequent proteasomal degradation of BIRC5 by the SCF(FBXL7) E3 ubiquitin-protein ligase complex. In terms of processing, ubiquitinated by the Cul9-RING ubiquitin-protein ligase complex, leading to its degradation. Ubiquitination is required for centrosomal targeting. Deubiquitinated by USP35 or USP38; leading to stabilization. Acetylation at Lys-129 results in its homodimerization, while deacetylation promotes the formation of monomers which heterodimerize with XPO1/CRM1 which facilitates its nuclear export. The acetylated form represses STAT3 transactivation. The dynamic equilibrium between its acetylation and deacetylation at Lys-129 determines its interaction with XPO1/CRM1, its subsequent subcellular localization, and its ability to inhibit STAT3 transactivation. Post-translationally, in vitro phosphorylation at Thr-117 by AURKB prevents interaction with INCENP and localization to mitotic chromosomes. Phosphorylation at Thr-48 by CK2 is critical for its mitotic and anti-apoptotic activities. Phosphorylation at Thr-34 by CDK15 is critical for its anti-apoptotic activity. Phosphorylation at Ser-20 by AURKC is critical for regulation of proper chromosome alignment and segregation, and possibly cytokinesis.

Its subcellular location is the cytoplasm. It localises to the nucleus. The protein localises to the chromosome. It is found in the centromere. The protein resides in the cytoskeleton. Its subcellular location is the spindle. It localises to the kinetochore. The protein localises to the midbody. Functionally, multitasking protein that has dual roles in promoting cell proliferation and preventing apoptosis. Component of a chromosome passage protein complex (CPC) which is essential for chromosome alignment and segregation during mitosis and cytokinesis. Acts as an important regulator of the localization of this complex; directs CPC movement to different locations from the inner centromere during prometaphase to midbody during cytokinesis and participates in the organization of the center spindle by associating with polymerized microtubules. Involved in the recruitment of CPC to centromeres during early mitosis via association with histone H3 phosphorylated at 'Thr-3' (H3pT3) during mitosis. The complex with RAN plays a role in mitotic spindle formation by serving as a physical scaffold to help deliver the RAN effector molecule TPX2 to microtubules. May counteract a default induction of apoptosis in G2/M phase. The acetylated form represses STAT3 transactivation of target gene promoters. May play a role in neoplasia. Inhibitor of CASP3 and CASP7. Essential for the maintenance of mitochondrial integrity and function. The protein is Baculoviral IAP repeat-containing protein 5 (BIRC5) of Pongo abelii (Sumatran orangutan).